A 307-amino-acid polypeptide reads, in one-letter code: Olfactory receptor 12D2 (307 aa).

Residues methionine 1 to proline 23 lie on the Extracellular side of the membrane. Asparagine 3 carries N-linked (GlcNAc...) asparagine glycosylation. The chain crosses the membrane as a helical span at residues phenylalanine 24–leucine 44. Residues methionine 45–arginine 52 lie on the Cytoplasmic side of the membrane. The chain crosses the membrane as a helical span at residues leucine 53–threonine 73. Topologically, residues valine 74–serine 97 are extracellular. Cysteines 95 and 187 form a disulfide. Residues glutamine 98 to phenylalanine 118 form a helical membrane-spanning segment. Residues aspartate 119–glutamine 137 lie on the Cytoplasmic side of the membrane. A helical transmembrane segment spans residues leucine 138 to serine 158. The Extracellular segment spans residues valine 159–tryptophan 195. Residues leucine 196–serine 215 traverse the membrane as a helical segment. Topologically, residues tyrosine 216 to alanine 236 are cytoplasmic. A helical transmembrane segment spans residues leucine 237–threonine 257. Residues tyrosine 258–aspartate 270 lie on the Extracellular side of the membrane. A helical membrane pass occupies residues arginine 271–leucine 291. Residues arginine 292–leucine 307 lie on the Cytoplasmic side of the membrane.

It belongs to the G-protein coupled receptor 1 family.

It is found in the cell membrane. Functionally, odorant receptor. The polypeptide is Olfactory receptor 12D2 (OR12D2) (Homo sapiens (Human)).